The sequence spans 78 residues: Large ribosomal subunit protein bL28 (78 aa).

The protein belongs to the bacterial ribosomal protein bL28 family.

The polypeptide is Large ribosomal subunit protein bL28 (Hydrogenovibrio crunogenus (strain DSM 25203 / XCL-2) (Thiomicrospira crunogena)).